A 204-amino-acid chain; its full sequence is High frequency lysogenization protein HflD homolog (204 aa).

Belongs to the HflD family.

The protein resides in the cytoplasm. Its subcellular location is the cell inner membrane. This chain is High frequency lysogenization protein HflD homolog, found in Xanthomonas axonopodis pv. citri (strain 306).